A 588-amino-acid chain; its full sequence is MPLKLTRRQYAEMFGPTVGDRVRLADTDLLVEVERDLIAEGGGYGNEIKFGGGKVIRDGMGQSPTARDADSLDLIITNALILDSRLGVIKADLGIKHGLIVGIGHGGNPGIQSGLGSTFVDPRTGKKNPMIVGAATEVIAGEGCIVTAGGIDTHIHFICPQQIEEAISSGITTMLGGGTGPATGTFATTCTPGAWNLRRMIEAAEAYPMNLGFLAKGNCGTPAPLREQVLAGAIGLKLHEDWGTTPAAIDVCLGVADEFDVQVAIHTDTLNEAGFVEATIRAFKGRTIHTFHSEGAGGGHAPDIIRVCGEPNVLPSSTNPTRPFTVNTIDEHLDMLMVCHHLDTKIPEDVAFAESRIRPETIAAEDCLHDLGAISIMSSDSQAMGRVGEVIIRTWQTAHKMKQQFGALAGGAHPAADNFRALRYLAKYTINPAIAQGIAHVVGSLEVGKLADLVLFKPALFGVKPELVLKGGFIAWANMGDPNASIPTPQPTFYRPQFGAAGRALTSTSLTFVSQAALDHGTFRDAGLARRLEPVKHCRRIGKRDMVLNDALPHIEVDPETYTVKADGRVLTCEPARELPMAQRYFLF.

The region spanning 149–588 is the Urease domain; sequence GGIDTHIHFI…LPMAQRYFLF (440 aa). Ni(2+) is bound by residues H154, H156, and K237. K237 carries the post-translational modification N6-carboxylysine. H239 is a binding site for substrate. Ni(2+) is bound by residues H266 and H292. The Proton donor role is filled by H340. D380 contacts Ni(2+).

Belongs to the metallo-dependent hydrolases superfamily. Urease alpha subunit family. Heterotrimer of UreA (gamma), UreB (beta) and UreC (alpha) subunits. Three heterotrimers associate to form the active enzyme. It depends on Ni cation as a cofactor. Post-translationally, carboxylation allows a single lysine to coordinate two nickel ions.

The protein resides in the cytoplasm. It catalyses the reaction urea + 2 H2O + H(+) = hydrogencarbonate + 2 NH4(+). The protein operates within nitrogen metabolism; urea degradation; CO(2) and NH(3) from urea (urease route): step 1/1. This is Urease subunit alpha from Opitutus terrae (strain DSM 11246 / JCM 15787 / PB90-1).